The primary structure comprises 410 residues: Cytohesin-2 (410 aa).

A coiled-coil region spans residues 13–56; that stretch reads PEERMELENIRRRKQELLVEIQRLREELSEAMSEVEGLEANEGS. In terms of domain architecture, SEC7 spans 54 to 241; the sequence is EGSKTLQRNR…RNLYDSIRNE (188 aa). One can recognise a PH domain in the interval 259-386; it reads NPDREGWLLK…WIKSIQAAVS (128 aa). Residues 268 to 271, arginine 290, tyrosine 301, arginine 311, lysine 349, asparagine 360, and histidine 361 each bind a 1,2-diacyl-sn-glycero-3-phospho-(1D-myo-inositol-3,4,5-trisphosphate); that span reads KLGA. The segment at 397 to 405 is C-terminal autoinhibitory region; that stretch reads RKKRISVKK.

As to quaternary structure, heteromer. Composed of TAMALIN, CYTH2 and at least one GRM1. Interacts with ARRB1. Interacts with ARL4D; the interaction is direct. Directly interacts with CCDC120 through the coiled coil domain; this interaction stabilizes CCDC120, possibly by preventing its ubiquitination, and is required for neurite growth in neuroblastoma cells. Interacts (via N-terminal domain) with INAVA (via N-terminal domain).

The protein resides in the cell membrane. It localises to the cytoplasm. Its subcellular location is the cell projection. The protein localises to the growth cone. In terms of biological role, acts as a guanine-nucleotide exchange factor (GEF). Promotes guanine-nucleotide exchange on ARF1, ARF3 and ARF6. Promotes the activation of ARF factors through replacement of GDP with GTP. The cell membrane form, in association with ARL4 proteins, recruits ARF6 to the plasma membrane. Involved in neurite growth. The sequence is that of Cytohesin-2 (CYTH2) from Bos taurus (Bovine).